Consider the following 404-residue polypeptide: Biflaviolin synthase CYP158A2 (404 aa).

Residues Arg288 and Leu293 each coordinate flaviolin. Cys353 is a heme binding site.

Belongs to the cytochrome P450 family. It depends on heme as a cofactor.

The enzyme catalyses 2 flaviolin + 2 reduced [2Fe-2S]-[ferredoxin] + O2 + H(+) = 3,3'-biflaviolin + 2 oxidized [2Fe-2S]-[ferredoxin] + 2 H2O. It carries out the reaction 2 flaviolin + 2 reduced [2Fe-2S]-[ferredoxin] + O2 + H(+) = 3,8'-biflaviolin + 2 oxidized [2Fe-2S]-[ferredoxin] + 2 H2O. It functions in the pathway pigment biosynthesis. Its function is as follows. Catalyzes oxidative C-C coupling reaction to polymerize flaviolin and form highly conjugated pigments which protect the soil bacterium from deleterious effects of UV irradiation (three isomers of biflaviolin and one triflaviolin). The sequence is that of Biflaviolin synthase CYP158A2 from Streptomyces coelicolor (strain ATCC BAA-471 / A3(2) / M145).